Consider the following 497-residue polypeptide: Putative zinc finger and SCAN domain-containing protein 5D (497 aa).

An SCAN box domain is found at 41–123 (KAGRRMFSCP…DLLRNNRRPK (83 aa)). Residues 148–342 (PASVRDDPRG…GPAGAVSHPN (195 aa)) form a disordered region. Polar residues predominate over residues 158–167 (VSSQRASSVN). 2 stretches are compositionally biased toward basic and acidic residues: residues 216-229 (PTLE…REEN) and 249-259 (KEGKEPKKRAS). 5 C2H2-type zinc fingers span residues 352–374 (FACG…MRSH), 380–402 (FQCN…QRIH), 408–430 (YTCD…KRSH), 436–458 (YKCK…KLIH), and 464–486 (YKCP…QKTH).

It is found in the nucleus. The polypeptide is Putative zinc finger and SCAN domain-containing protein 5D (Homo sapiens (Human)).